The primary structure comprises 542 residues: Chaperonin GroEL 2 (542 aa).

Residues 30 to 33 (TLGP), K51, 87 to 91 (DGTTT), G415, and D495 each bind ATP.

The protein belongs to the chaperonin (HSP60) family. Forms a cylinder of 14 subunits composed of two heptameric rings stacked back-to-back. Interacts with the co-chaperonin GroES.

Its subcellular location is the cytoplasm. The catalysed reaction is ATP + H2O + a folded polypeptide = ADP + phosphate + an unfolded polypeptide.. In terms of biological role, together with its co-chaperonin GroES, plays an essential role in assisting protein folding. The GroEL-GroES system forms a nano-cage that allows encapsulation of the non-native substrate proteins and provides a physical environment optimized to promote and accelerate protein folding. This is Chaperonin GroEL 2 from Methylococcus capsulatus (strain ATCC 33009 / NCIMB 11132 / Bath).